Here is a 571-residue protein sequence, read N- to C-terminus: Urease subunit alpha (571 aa).

Residues 131 to 571 enclose the Urease domain; it reads GGIDAHIHFI…LPMAQRYFLF (441 aa). Residues His-136, His-138, and Lys-219 each contribute to the Ni(2+) site. Lys-219 is subject to N6-carboxylysine. His-221 is a binding site for substrate. Ni(2+) is bound by residues His-248 and His-274. His-322 functions as the Proton donor in the catalytic mechanism. Residue Asp-362 participates in Ni(2+) binding.

Belongs to the metallo-dependent hydrolases superfamily. Urease alpha subunit family. As to quaternary structure, heterotrimer of UreA (gamma), UreB (beta) and UreC (alpha) subunits. Three heterotrimers associate to form the active enzyme. Ni cation serves as cofactor. Carboxylation allows a single lysine to coordinate two nickel ions.

The protein localises to the cytoplasm. It catalyses the reaction urea + 2 H2O + H(+) = hydrogencarbonate + 2 NH4(+). It participates in nitrogen metabolism; urea degradation; CO(2) and NH(3) from urea (urease route): step 1/1. The sequence is that of Urease subunit alpha from Nostoc punctiforme (strain ATCC 29133 / PCC 73102).